Reading from the N-terminus, the 446-residue chain is uncharacterized protein (446 aa).

2 disordered regions span residues 63-95 (KNKPHDLKNPKRSVSFKYKPNNSRSDLEESDLR) and 155-232 (AESS…HPVK). Over residues 156-169 (ESSVPTPKLTNESN) the composition is skewed to polar residues. Basic and acidic residues-rich tracts occupy residues 182–199 (DQHESRTKKSMHSTDHSA) and 213–227 (ITKESELTRNDEARK).

This is an uncharacterized protein from Mus musculus (Mouse).